The sequence spans 722 residues: Glycine--tRNA ligase beta subunit (722 aa).

Belongs to the class-II aminoacyl-tRNA synthetase family. Tetramer of two alpha and two beta subunits.

The protein localises to the cytoplasm. It carries out the reaction tRNA(Gly) + glycine + ATP = glycyl-tRNA(Gly) + AMP + diphosphate. This is Glycine--tRNA ligase beta subunit from Xylella fastidiosa (strain M12).